The following is a 671-amino-acid chain: DNA ligase (671 aa).

Residues 32 to 36, 81 to 82, and Glu-113 contribute to the NAD(+) site; these read DAEYD and SL. The N6-AMP-lysine intermediate role is filled by Lys-115. NAD(+)-binding residues include Arg-136, Glu-173, Lys-290, and Lys-314. The Zn(2+) site is built by Cys-408, Cys-411, Cys-426, and Cys-432. The BRCT domain occupies 593-671; the sequence is EIDSPFAGKT…EAEMIRLLGA (79 aa).

It belongs to the NAD-dependent DNA ligase family. LigA subfamily. Mg(2+) is required as a cofactor. Requires Mn(2+) as cofactor.

The catalysed reaction is NAD(+) + (deoxyribonucleotide)n-3'-hydroxyl + 5'-phospho-(deoxyribonucleotide)m = (deoxyribonucleotide)n+m + AMP + beta-nicotinamide D-nucleotide.. Functionally, DNA ligase that catalyzes the formation of phosphodiester linkages between 5'-phosphoryl and 3'-hydroxyl groups in double-stranded DNA using NAD as a coenzyme and as the energy source for the reaction. It is essential for DNA replication and repair of damaged DNA. In Salmonella typhi, this protein is DNA ligase.